The chain runs to 174 residues: Peptide deformylase (174 aa).

2 residues coordinate Fe cation: Cys96 and His138. Glu139 is a catalytic residue. Residue His142 coordinates Fe cation.

The protein belongs to the polypeptide deformylase family. Fe(2+) is required as a cofactor.

It catalyses the reaction N-terminal N-formyl-L-methionyl-[peptide] + H2O = N-terminal L-methionyl-[peptide] + formate. Its function is as follows. Removes the formyl group from the N-terminal Met of newly synthesized proteins. Requires at least a dipeptide for an efficient rate of reaction. N-terminal L-methionine is a prerequisite for activity but the enzyme has broad specificity at other positions. The chain is Peptide deformylase from Helicobacter pylori (strain HPAG1).